Reading from the N-terminus, the 203-residue chain is Probable chemoreceptor glutamine deamidase CheD (203 aa).

It belongs to the CheD family.

The enzyme catalyses L-glutaminyl-[protein] + H2O = L-glutamyl-[protein] + NH4(+). Its function is as follows. Probably deamidates glutamine residues to glutamate on methyl-accepting chemotaxis receptors (MCPs), playing an important role in chemotaxis. In Methylobacillus flagellatus (strain ATCC 51484 / DSM 6875 / VKM B-1610 / KT), this protein is Probable chemoreceptor glutamine deamidase CheD.